The chain runs to 182 residues: UPF0397 protein SPH_0594 (182 aa).

5 consecutive transmembrane segments (helical) span residues 10–30, 46–66, 73–93, 109–129, and 148–168; these read VVAV…NIPT, LLSI…GHAI, YGLW…VGLF, ILIF…VLAP, and IVAG…LLLA.

The protein belongs to the UPF0397 family.

Its subcellular location is the cell membrane. This is UPF0397 protein SPH_0594 from Streptococcus pneumoniae (strain Hungary19A-6).